Here is a 367-residue protein sequence, read N- to C-terminus: Putative F-box/kelch-repeat protein At4g39600 (367 aa).

Residues 11 to 57 (ATSNPSLPEDLVVSCLARVSRLYYPTLSLVSKSFRSLIASPDLYKTR) form the F-box domain. Kelch repeat units follow at residues 127–171 (HLYA…LDGK) and 172–216 (MYLA…EGKI).

The protein is Putative F-box/kelch-repeat protein At4g39600 of Arabidopsis thaliana (Mouse-ear cress).